The sequence spans 326 residues: Transposase InsH for insertion sequence element IS5Y (326 aa).

It belongs to the transposase 11 family.

Involved in the transposition of the insertion sequence IS5. The protein is Transposase InsH for insertion sequence element IS5Y (insH5) of Escherichia coli (strain K12).